Here is a 242-residue protein sequence, read N- to C-terminus: Mannosyl-3-phosphoglycerate phosphatase (242 aa).

Asp8 (nucleophile) is an active-site residue. Mg(2+)-binding residues include Asp8, Asp10, Ser169, and Asp204.

Belongs to the HAD-like hydrolase superfamily. MPGP family. It depends on Mg(2+) as a cofactor.

Its subcellular location is the cytoplasm. It catalyses the reaction 2-O-(alpha-D-mannosyl)-3-phosphoglycerate + H2O = (2R)-2-O-(alpha-D-mannosyl)-glycerate + phosphate. It participates in carbohydrate biosynthesis; 2-(alpha-D-mannosyl)-D-glycerate biosynthesis; 2-(alpha-D-mannosyl)-D-glycerate from GDP-alpha-D-mannose (MPG route): step 2/2. Functionally, hydrolyzes mannosyl-3-phosphoglycerate (MPG) to form the osmolyte mannosylglycerate (MG). This chain is Mannosyl-3-phosphoglycerate phosphatase, found in Pyrococcus furiosus (strain ATCC 43587 / DSM 3638 / JCM 8422 / Vc1).